The following is a 470-amino-acid chain: Zinc finger protein weckle (470 aa).

The interval 1 to 103 (MGVPTSDWIY…DALRLEYGLP (103 aa)) is required for homodimerization. The ZAD domain occupies 10 to 82 (YWCRLCARDD…SKVQAIFELL (73 aa)). Positions 12, 15, 55, and 58 each coordinate Zn(2+). Residues 156-265 (NSDPKVLASP…LSMSPHGSQS (110 aa)) form a disordered region. The residue at position 168 (Ser-168) is a Phosphoserine. A compositionally biased stretch (acidic residues) spans 195–208 (ESDDEEAILDEDEA). Positions 214–225 (LKRKRGRPKGSG) are enriched in basic residues. The span at 237-254 (TSREPDDNAKSKQDDKTS) shows a compositional bias: basic and acidic residues. A compositionally biased stretch (polar residues) spans 255–265 (ELSMSPHGSQS). 6 consecutive C2H2-type zinc fingers follow at residues 271-294 (YPCKICNETFMSFMALRRHKHDMH), 300-322 (YVCDHCGKGLKTFTSLVEHQLVH), 328-350 (CICPVCNAGFKNKARLRVHSQTH), 355-377 (FECNVCGKKLQTRAILNKHKYVH), 383-405 (FKCEVCGSGCKNSTALKIHLLGH), and 411-434 (YVCKYCGKAFASNTNCRSHKWKKH).

As to quaternary structure, homodimer. Interacts with Myd88 and Toll.

It localises to the cell membrane. In terms of biological role, acts as an adapter to assemble/stabilize a Toll/wek/Myd88/tube complex; required for efficient recruitment of Myd88 to Toll. Dispensable for innate immune response; plays a minimal role, if any, in the immune defense against Gram-positive bacteria and fungi. Involved in dorsoventral axis determination. This Drosophila melanogaster (Fruit fly) protein is Zinc finger protein weckle.